A 73-amino-acid polypeptide reads, in one-letter code: Large ribosomal subunit protein bL31 (73 aa).

Cys-16, Cys-18, Cys-36, and Cys-39 together coordinate Zn(2+).

It belongs to the bacterial ribosomal protein bL31 family. Type A subfamily. Part of the 50S ribosomal subunit. It depends on Zn(2+) as a cofactor.

In terms of biological role, binds the 23S rRNA. The polypeptide is Large ribosomal subunit protein bL31 (Myxococcus xanthus (strain DK1622)).